Consider the following 305-residue polypeptide: tRNA dimethylallyltransferase (305 aa).

8–15 (GPTAIGKS) is a binding site for ATP. A substrate-binding site is contributed by 10-15 (TAIGKS). The tract at residues 33–36 (DSMA) is interaction with substrate tRNA.

Belongs to the IPP transferase family. As to quaternary structure, monomer. It depends on Mg(2+) as a cofactor.

The enzyme catalyses adenosine(37) in tRNA + dimethylallyl diphosphate = N(6)-dimethylallyladenosine(37) in tRNA + diphosphate. Functionally, catalyzes the transfer of a dimethylallyl group onto the adenine at position 37 in tRNAs that read codons beginning with uridine, leading to the formation of N6-(dimethylallyl)adenosine (i(6)A). The chain is tRNA dimethylallyltransferase from Aquifex aeolicus (strain VF5).